Reading from the N-terminus, the 520-residue chain is Cholesterol side-chain cleavage enzyme, mitochondrial (520 aa).

The transit peptide at 1–39 directs the protein to the mitochondrion; sequence MLARGLPLRSALVKACPPLLNTGREGWGHHRVGTGEGAG. The tract at residues 27–48 is disordered; it reads WGHHRVGTGEGAGISTRTPRPY. Cys-461 contributes to the heme binding site.

This sequence belongs to the cytochrome P450 family. In terms of assembly, interacts with FDX1/adrenodoxin. Requires heme as cofactor.

The protein localises to the mitochondrion inner membrane. It catalyses the reaction 6 reduced [adrenodoxin] + cholesterol + 3 O2 + 6 H(+) = 4-methylpentanal + pregnenolone + 6 oxidized [adrenodoxin] + 4 H2O. The enzyme catalyses 2 reduced [adrenodoxin] + cholesterol + O2 + 2 H(+) = (22R)-hydroxycholesterol + 2 oxidized [adrenodoxin] + H2O. The catalysed reaction is (22R)-hydroxycholesterol + 2 reduced [adrenodoxin] + O2 + 2 H(+) = (20R,22R)-20,22-dihydroxycholesterol + 2 oxidized [adrenodoxin] + H2O. It carries out the reaction (20R,22R)-20,22-dihydroxycholesterol + 2 reduced [adrenodoxin] + O2 + 2 H(+) = 4-methylpentanal + pregnenolone + 2 oxidized [adrenodoxin] + 2 H2O. The protein operates within lipid metabolism; C21-steroid hormone metabolism. It functions in the pathway steroid metabolism; cholesterol metabolism. A cytochrome P450 monooxygenase that catalyzes the side-chain hydroxylation and cleavage of cholesterol to pregnenolone, the precursor of most steroid hormones. Catalyzes three sequential oxidation reactions of cholesterol, namely the hydroxylation at C22 followed with the hydroxylation at C20 to yield 20R,22R-hydroxycholesterol that is further cleaved between C20 and C22 to yield the C21-steroid pregnenolone and 4-methylpentanal. Mechanistically, uses molecular oxygen inserting one oxygen atom into a substrate and reducing the second into a water molecule. Two electrons are provided by NADPH via a two-protein mitochondrial transfer system comprising flavoprotein FDXR (adrenodoxin/ferredoxin reductase) and nonheme iron-sulfur protein FDX1 or FDX2 (adrenodoxin/ferredoxin). In Capra hircus (Goat), this protein is Cholesterol side-chain cleavage enzyme, mitochondrial.